Here is a 394-residue protein sequence, read N- to C-terminus: Elongation factor Tu 1 (394 aa).

The region spanning 10-204 is the tr-type G domain; it reads KPHVNVGTIG…ALDSYIPEPE (195 aa). The G1 stretch occupies residues 19-26; the sequence is GHVDHGKT. 19-26 contacts GTP; it reads GHVDHGKT. Thr-26 is a Mg(2+) binding site. The tract at residues 60–64 is G2; sequence GITIS. The G3 stretch occupies residues 81–84; it reads DCPG. Residues 81–85 and 136–139 contribute to the GTP site; these read DCPGH and NKCD. The interval 136-139 is G4; it reads NKCD. The tract at residues 174–176 is G5; the sequence is SAL.

It belongs to the TRAFAC class translation factor GTPase superfamily. Classic translation factor GTPase family. EF-Tu/EF-1A subfamily. Monomer.

The protein localises to the cytoplasm. It catalyses the reaction GTP + H2O = GDP + phosphate + H(+). GTP hydrolase that promotes the GTP-dependent binding of aminoacyl-tRNA to the A-site of ribosomes during protein biosynthesis. In Photorhabdus laumondii subsp. laumondii (strain DSM 15139 / CIP 105565 / TT01) (Photorhabdus luminescens subsp. laumondii), this protein is Elongation factor Tu 1.